The primary structure comprises 390 residues: Zinc finger protein 121 (390 aa).

Residues 88–110 (FEYSDCEEAFVDQSHLQANRITH) form a C2H2-type 1; degenerate zinc finger. The C2H2-type 2; degenerate zinc finger occupies 116 to 138 (YEQKQCGRAFTYSTSHAVSVKMH). C2H2-type zinc fingers lie at residues 144–166 (YECKECGKFFRYSSYLNSHMRTH), 172–194 (YECKECGKCFTVSSHLVEHVRIH), 200–222 (YQCKECGRAFAGRSGLTKHVRIH), 228–250 (YECNECGKAYNRFYLLTEHFKTH), 256–278 (FECKVCGKSFRSSSCLKNHFRIH), 284–306 (YKCKECGKAFTVSSSLHNHVKIH), 312–334 (YECKDCGKAFATSSQLIEHIRTH), 340–362 (YICKECGKTFRASSHLQKHVRIH), and 368–390 (YICNECGKAYNRFYLLTKHLKTH).

The protein belongs to the krueppel C2H2-type zinc-finger protein family.

It localises to the nucleus. Its function is as follows. May be involved in transcriptional regulation. This chain is Zinc finger protein 121 (ZNF121), found in Homo sapiens (Human).